Reading from the N-terminus, the 131-residue chain is D-ribose pyranase (131 aa).

The active-site Proton donor is histidine 20. Residues aspartate 28, histidine 98, and tyrosine 120–asparagine 122 contribute to the substrate site.

The protein belongs to the RbsD / FucU family. RbsD subfamily. In terms of assembly, homodecamer.

It localises to the cytoplasm. It catalyses the reaction beta-D-ribopyranose = beta-D-ribofuranose. It participates in carbohydrate metabolism; D-ribose degradation; D-ribose 5-phosphate from beta-D-ribopyranose: step 1/2. Its function is as follows. Catalyzes the interconversion of beta-pyran and beta-furan forms of D-ribose. This is D-ribose pyranase from Limosilactobacillus reuteri (strain DSM 20016) (Lactobacillus reuteri).